Consider the following 62-residue polypeptide: Large ribosomal subunit protein bL33c (62 aa).

It belongs to the bacterial ribosomal protein bL33 family.

The protein resides in the plastid. It localises to the chloroplast. The protein is Large ribosomal subunit protein bL33c of Cyanidioschyzon merolae (strain NIES-3377 / 10D) (Unicellular red alga).